The chain runs to 147 residues: UPF0306 protein YhbP (147 aa).

The protein belongs to the UPF0306 family.

In Escherichia coli O157:H7, this protein is UPF0306 protein YhbP.